The primary structure comprises 397 residues: Phosphoglycerate kinase (397 aa).

Substrate contacts are provided by residues 25–27 (DLN), Arg-41, 64–67 (HLGR), Arg-118, and Arg-151. ATP-binding positions include Lys-202, Glu-324, and 350–353 (GGDT).

It belongs to the phosphoglycerate kinase family. Monomer.

It localises to the cytoplasm. It catalyses the reaction (2R)-3-phosphoglycerate + ATP = (2R)-3-phospho-glyceroyl phosphate + ADP. The protein operates within carbohydrate degradation; glycolysis; pyruvate from D-glyceraldehyde 3-phosphate: step 2/5. The protein is Phosphoglycerate kinase of Albidiferax ferrireducens (strain ATCC BAA-621 / DSM 15236 / T118) (Rhodoferax ferrireducens).